Consider the following 294-residue polypeptide: Arsenical-resistance protein ARR1 (294 aa).

Residues 1–11 (MAKPRGRKGGR) show a composition bias toward basic residues. Residues 1–29 (MAKPRGRKGGRKPSLTPPKNKRAAQLRAS) form a disordered region. Residues 22-45 (RAAQLRASQNAFRKRKLERLEELE) are basic motif. Positions 22 to 72 (RAAQLRASQNAFRKRKLERLEELEKKEAQLTVTNDQIHILKKENELLHFML) constitute a bZIP domain. A leucine-zipper region spans residues 44-72 (LEKKEAQLTVTNDQIHILKKENELLHFML). C132, C137, and C274 together coordinate arsenite.

It belongs to the bZIP family. YAP subfamily. In terms of assembly, homodimer. In terms of processing, phosphorylation by HOG1 promotes nuclear localization in the presence of arsenic.

The protein localises to the cytoplasm. The protein resides in the nucleus. Its activity is regulated as follows. Transcriptional activity is controlled by regulated degradation by the ubiquitin-proteasome pathway in absence of arsenic. Arsenic-exposure results in stabilization and increased transcriptional activity. Its function is as follows. Transcription activator required for resistance to arsenic compounds and for a regulated expression of ACR2, ACR3 and YCF1. The polypeptide is Arsenical-resistance protein ARR1 (Saccharomyces cerevisiae (strain ATCC 204508 / S288c) (Baker's yeast)).